The sequence spans 238 residues: Protein shisa-3 homolog (238 aa).

The signal sequence occupies residues 1–21; it reads MRALLALCLLLGWLRWGPAGA. The Lumenal segment spans residues 22 to 98; that stretch reads QQSGEYCHGW…GITAQPVYVP (77 aa). The chain crosses the membrane as a helical span at residues 99 to 119; the sequence is FLIVGSIFIAFIILGSVVAIY. Residues 120–238 are Cytoplasmic-facing; that stretch reads CCTCLRPKEP…GKSCPDFSSS (119 aa). Residues 151 to 173 form a disordered region; it reads TSTSPRAPSRQSSTATSSSSTGG. Positions 159–173 are enriched in low complexity; the sequence is SRQSSTATSSSSTGG.

It belongs to the shisa family.

Its subcellular location is the endoplasmic reticulum membrane. Plays an essential role in the maturation of presomitic mesoderm cells by individual attenuation of both FGF and WNT signaling. This is Protein shisa-3 homolog (SHISA3) from Homo sapiens (Human).